Consider the following 452-residue polypeptide: Probable ECA polymerase (452 aa).

Helical transmembrane passes span 6–26 (FSGL…LTWF), 37–57 (VFFS…TSVL), 63–83 (VGVA…CFYG), 118–138 (VILM…NGFL), 155–175 (GVAL…VYFL), 181–201 (AWLF…MIVG), 207–227 (IIIA…ISLW), 228–248 (MLAA…LKRY), 341–361 (LVVM…GMII), 378–398 (YKAA…IVLA), and 410–430 (VFFL…FWLF).

The protein belongs to the WzyE family. As to quaternary structure, probably part of a complex composed of WzxE, WzyE and WzzE.

The protein resides in the cell inner membrane. It participates in bacterial outer membrane biogenesis; enterobacterial common antigen biosynthesis. In terms of biological role, probably involved in the polymerization of enterobacterial common antigen (ECA) trisaccharide repeat units. The chain is Probable ECA polymerase from Salmonella newport (strain SL254).